The following is a 139-amino-acid chain: ATP synthase epsilon chain (139 aa).

Belongs to the ATPase epsilon chain family. F-type ATPases have 2 components, CF(1) - the catalytic core - and CF(0) - the membrane proton channel. CF(1) has five subunits: alpha(3), beta(3), gamma(1), delta(1), epsilon(1). CF(0) has three main subunits: a, b and c.

It localises to the cell inner membrane. Functionally, produces ATP from ADP in the presence of a proton gradient across the membrane. The sequence is that of ATP synthase epsilon chain from Pseudomonas putida (strain ATCC 47054 / DSM 6125 / CFBP 8728 / NCIMB 11950 / KT2440).